Reading from the N-terminus, the 169-residue chain is NAD(P)H-quinone oxidoreductase subunit 6, chloroplastic (169 aa).

The next 5 membrane-spanning stretches (helical) occupy residues 7-27 (FSSA…IFLP), 29-49 (IVYA…IYVL), 58-78 (AQVL…IMLV), 90-110 (SPPL…VQMI), and 139-159 (LLAF…AIVL).

Belongs to the complex I subunit 6 family. As to quaternary structure, NDH is composed of at least 16 different subunits, 5 of which are encoded in the nucleus.

It is found in the plastid. The protein resides in the chloroplast thylakoid membrane. It catalyses the reaction a plastoquinone + NADH + (n+1) H(+)(in) = a plastoquinol + NAD(+) + n H(+)(out). It carries out the reaction a plastoquinone + NADPH + (n+1) H(+)(in) = a plastoquinol + NADP(+) + n H(+)(out). NDH shuttles electrons from NAD(P)H:plastoquinone, via FMN and iron-sulfur (Fe-S) centers, to quinones in the photosynthetic chain and possibly in a chloroplast respiratory chain. The immediate electron acceptor for the enzyme in this species is believed to be plastoquinone. Couples the redox reaction to proton translocation, and thus conserves the redox energy in a proton gradient. This Nephroselmis olivacea (Green alga) protein is NAD(P)H-quinone oxidoreductase subunit 6, chloroplastic (ndhG).